The chain runs to 605 residues: Ankyrin repeat domain-containing protein 13D (605 aa).

ANK repeat units lie at residues 39–68 (RGRT…NVGK) and 72–101 (QGWA…YQRA). A disordered region spans residues 306–333 (AQQHSSHTGAPVQQAASPTNPTAISPEE). Positions 319–328 (QAASPTNPTA) are enriched in polar residues. UIM domains are found at residues 482–501 (EDDD…AGTE) and 528–547 (EEQL…STEP). The interval 541 to 605 (LQLSTEPRGP…RILQLSLTEH (65 aa)) is disordered. Pro residues predominate over residues 550 to 563 (PGSPPRTPPAPGPP). Ser-552 is subject to Phosphoserine. Thr-556 bears the Phosphothreonine mark. The span at 564–575 (SFEEQLRLALEL) shows a compositional bias: low complexity. 2 consecutive UIM domains span residues 564-583 (SFEE…QEER) and 589-605 (QEEE…LTEH). The span at 576-589 (SSREQEERERRGQQ) shows a compositional bias: basic and acidic residues.

Interacts with EGFR (ubiquitinated); the interaction is direct and may regulate EGFR internalization.

The protein localises to the cell membrane. The protein resides in the late endosome. Its function is as follows. Ubiquitin-binding protein that specifically recognizes and binds 'Lys-63'-linked ubiquitin. Does not bind 'Lys-48'-linked ubiquitin. Positively regulates the internalization of ligand-activated EGFR by binding to the Ub moiety of ubiquitinated EGFR at the cell membrane. This Homo sapiens (Human) protein is Ankyrin repeat domain-containing protein 13D (ANKRD13D).